The sequence spans 366 residues: Ribosomal RNA large subunit methyltransferase M (366 aa).

Residues Ser188, 221-224, Asp240, Asp260, and Asp277 contribute to the S-adenosyl-L-methionine site; that span reads CPGG. Lys306 functions as the Proton acceptor in the catalytic mechanism.

It belongs to the class I-like SAM-binding methyltransferase superfamily. RNA methyltransferase RlmE family. RlmM subfamily. In terms of assembly, monomer.

Its subcellular location is the cytoplasm. It carries out the reaction cytidine(2498) in 23S rRNA + S-adenosyl-L-methionine = 2'-O-methylcytidine(2498) in 23S rRNA + S-adenosyl-L-homocysteine + H(+). Its function is as follows. Catalyzes the 2'-O-methylation at nucleotide C2498 in 23S rRNA. The chain is Ribosomal RNA large subunit methyltransferase M from Cronobacter sakazakii (strain ATCC BAA-894) (Enterobacter sakazakii).